Here is a 238-residue protein sequence, read N- to C-terminus: uncharacterized protein (238 aa).

It to M.thermoautotrophicum MTH564.

This is an uncharacterized protein from Methanocaldococcus jannaschii (strain ATCC 43067 / DSM 2661 / JAL-1 / JCM 10045 / NBRC 100440) (Methanococcus jannaschii).